Reading from the N-terminus, the 511-residue chain is RNA-splicing ligase RtcB homolog (511 aa).

Mn(2+) is bound by residues D125, C128, H233, H265, and H359. Residue 232-236 (NHYAE) coordinates GMP. GMP-binding positions include 359–360 (HN), 408–411 (GGTM), S415, 434–437 (HGAG), and K510. The active-site GMP-histidine intermediate is H434.

Belongs to the RtcB family. As to quaternary structure, catalytic component of the tRNA-splicing ligase complex. The cofactor is Mn(2+).

It catalyses the reaction a 3'-end 3'-phospho-ribonucleotide-RNA + a 5'-end dephospho-ribonucleoside-RNA + GTP = a ribonucleotidyl-ribonucleotide-RNA + GMP + diphosphate. The catalysed reaction is a 3'-end 2',3'-cyclophospho-ribonucleotide-RNA + a 5'-end dephospho-ribonucleoside-RNA + GTP + H2O = a ribonucleotidyl-ribonucleotide-RNA + GMP + diphosphate + H(+). Functionally, catalytic subunit of the tRNA-splicing ligase complex that acts by directly joining spliced tRNA halves to mature-sized tRNAs by incorporating the precursor-derived splice junction phosphate into the mature tRNA as a canonical 3',5'-phosphodiester. May act as an RNA ligase with broad substrate specificity, and may function toward other RNAs. This Plasmodium knowlesi (strain H) protein is RNA-splicing ligase RtcB homolog.